A 391-amino-acid polypeptide reads, in one-letter code: UPF0229 protein BAA_0633 (391 aa).

Residues 1–16 are compositionally biased toward polar residues; it reads MGEENQPNYTISQENW. 2 disordered regions span residues 1–31 and 80–117; these read MGEE…RHQE and HVGQ…GDAA. A compositionally biased stretch (basic and acidic residues) spans 21 to 31; sequence KGYDDQQRHQE. Residues 98 to 115 show a composition bias toward gly residues; it reads GSGGQKQKGPGKGQGAGD.

The protein belongs to the UPF0229 family.

The sequence is that of UPF0229 protein BAA_0633 from Bacillus anthracis (strain A0248).